The chain runs to 153 residues: 3-hydroxyacyl-[acyl-carrier-protein] dehydratase FabZ (153 aa).

Residue His57 is part of the active site.

Belongs to the thioester dehydratase family. FabZ subfamily.

It is found in the cytoplasm. It carries out the reaction a (3R)-hydroxyacyl-[ACP] = a (2E)-enoyl-[ACP] + H2O. Functionally, involved in unsaturated fatty acids biosynthesis. Catalyzes the dehydration of short chain beta-hydroxyacyl-ACPs and long chain saturated and unsaturated beta-hydroxyacyl-ACPs. The protein is 3-hydroxyacyl-[acyl-carrier-protein] dehydratase FabZ of Xanthomonas oryzae pv. oryzae (strain MAFF 311018).